The primary structure comprises 238 residues: Large ribosomal subunit protein uL1 (238 aa).

Belongs to the universal ribosomal protein uL1 family. Part of the 50S ribosomal subunit.

In terms of biological role, binds directly to 23S rRNA. The L1 stalk is quite mobile in the ribosome, and is involved in E site tRNA release. Functionally, protein L1 is also a translational repressor protein, it controls the translation of the L11 operon by binding to its mRNA. This chain is Large ribosomal subunit protein uL1, found in Salinispora tropica (strain ATCC BAA-916 / DSM 44818 / JCM 13857 / NBRC 105044 / CNB-440).